The primary structure comprises 164 residues: Large ribosomal subunit protein uL15 (164 aa).

A compositionally biased stretch (polar residues) spans 1–14; it reads MKLNEIQDNPGSSK. The tract at residues 1–35 is disordered; that stretch reads MKLNEIQDNPGSSKSRMRVGRGIGSGKGKTCGRGV. Positions 21-35 are enriched in gly residues; it reads RGIGSGKGKTCGRGV.

Belongs to the universal ribosomal protein uL15 family. In terms of assembly, part of the 50S ribosomal subunit.

In terms of biological role, binds to the 23S rRNA. The protein is Large ribosomal subunit protein uL15 of Methylocella silvestris (strain DSM 15510 / CIP 108128 / LMG 27833 / NCIMB 13906 / BL2).